Here is a 284-residue protein sequence, read N- to C-terminus: UPF0276 protein PA3283 (284 aa).

The protein belongs to the UPF0276 family.

The sequence is that of UPF0276 protein PA3283 from Pseudomonas aeruginosa (strain ATCC 15692 / DSM 22644 / CIP 104116 / JCM 14847 / LMG 12228 / 1C / PRS 101 / PAO1).